The following is a 118-amino-acid chain: Large ribosomal subunit protein bL20 (118 aa).

This sequence belongs to the bacterial ribosomal protein bL20 family.

Its function is as follows. Binds directly to 23S ribosomal RNA and is necessary for the in vitro assembly process of the 50S ribosomal subunit. It is not involved in the protein synthesizing functions of that subunit. In Hydrogenovibrio crunogenus (strain DSM 25203 / XCL-2) (Thiomicrospira crunogena), this protein is Large ribosomal subunit protein bL20.